A 351-amino-acid chain; its full sequence is Phospho-N-acetylmuramoyl-pentapeptide-transferase (351 aa).

10 helical membrane passes run 17 to 37 (TAYA…FIIL), 63 to 83 (IPTM…FFWI), 85 to 105 (LWNV…CLGF), 135 to 155 (ISVT…YFPF), 158 to 178 (SLKL…LISA), 190 to 210 (GLAI…AYLT), 230 to 250 (LVIF…FNAY), 254 to 274 (IMMG…TALI), 279 to 299 (ILFA…IIQV), and 328 to 348 (QVVI…LSTL).

Belongs to the glycosyltransferase 4 family. MraY subfamily. Mg(2+) serves as cofactor.

It localises to the cell inner membrane. It carries out the reaction UDP-N-acetyl-alpha-D-muramoyl-L-alanyl-gamma-D-glutamyl-meso-2,6-diaminopimeloyl-D-alanyl-D-alanine + di-trans,octa-cis-undecaprenyl phosphate = di-trans,octa-cis-undecaprenyl diphospho-N-acetyl-alpha-D-muramoyl-L-alanyl-D-glutamyl-meso-2,6-diaminopimeloyl-D-alanyl-D-alanine + UMP. It participates in cell wall biogenesis; peptidoglycan biosynthesis. In terms of biological role, catalyzes the initial step of the lipid cycle reactions in the biosynthesis of the cell wall peptidoglycan: transfers peptidoglycan precursor phospho-MurNAc-pentapeptide from UDP-MurNAc-pentapeptide onto the lipid carrier undecaprenyl phosphate, yielding undecaprenyl-pyrophosphoryl-MurNAc-pentapeptide, known as lipid I. This Borrelia hermsii (strain HS1 / DAH) protein is Phospho-N-acetylmuramoyl-pentapeptide-transferase.